The chain runs to 311 residues: 4-hydroxy-3-methylbut-2-enyl diphosphate reductase (311 aa).

Position 14 (C14) interacts with [4Fe-4S] cluster. H43 and H76 together coordinate (2E)-4-hydroxy-3-methylbut-2-enyl diphosphate. 2 residues coordinate dimethylallyl diphosphate: H43 and H76. Isopentenyl diphosphate is bound by residues H43 and H76. C98 is a [4Fe-4S] cluster binding site. (2E)-4-hydroxy-3-methylbut-2-enyl diphosphate is bound at residue H126. H126 contributes to the dimethylallyl diphosphate binding site. H126 serves as a coordination point for isopentenyl diphosphate. Residue E128 is the Proton donor of the active site. T166 contributes to the (2E)-4-hydroxy-3-methylbut-2-enyl diphosphate binding site. C196 lines the [4Fe-4S] cluster pocket. The (2E)-4-hydroxy-3-methylbut-2-enyl diphosphate site is built by S224, S225, N226, and S268. Residues S224, S225, N226, and S268 each coordinate dimethylallyl diphosphate. Isopentenyl diphosphate contacts are provided by S224, S225, N226, and S268.

This sequence belongs to the IspH family. [4Fe-4S] cluster serves as cofactor.

It catalyses the reaction isopentenyl diphosphate + 2 oxidized [2Fe-2S]-[ferredoxin] + H2O = (2E)-4-hydroxy-3-methylbut-2-enyl diphosphate + 2 reduced [2Fe-2S]-[ferredoxin] + 2 H(+). The catalysed reaction is dimethylallyl diphosphate + 2 oxidized [2Fe-2S]-[ferredoxin] + H2O = (2E)-4-hydroxy-3-methylbut-2-enyl diphosphate + 2 reduced [2Fe-2S]-[ferredoxin] + 2 H(+). The protein operates within isoprenoid biosynthesis; dimethylallyl diphosphate biosynthesis; dimethylallyl diphosphate from (2E)-4-hydroxy-3-methylbutenyl diphosphate: step 1/1. It participates in isoprenoid biosynthesis; isopentenyl diphosphate biosynthesis via DXP pathway; isopentenyl diphosphate from 1-deoxy-D-xylulose 5-phosphate: step 6/6. In terms of biological role, catalyzes the conversion of 1-hydroxy-2-methyl-2-(E)-butenyl 4-diphosphate (HMBPP) into a mixture of isopentenyl diphosphate (IPP) and dimethylallyl diphosphate (DMAPP). Acts in the terminal step of the DOXP/MEP pathway for isoprenoid precursor biosynthesis. The protein is 4-hydroxy-3-methylbut-2-enyl diphosphate reductase of Chromobacterium violaceum (strain ATCC 12472 / DSM 30191 / JCM 1249 / CCUG 213 / NBRC 12614 / NCIMB 9131 / NCTC 9757 / MK).